Reading from the N-terminus, the 201-residue chain is Small ribosomal subunit protein uS4c (201 aa).

Residues 23–42 (SKKPRAGSNLRNQLRPGKKS) form a disordered region. One can recognise an S4 RNA-binding domain in the interval 89–151 (MRLDNILFRL…QKSKSLVQNY (63 aa)).

Belongs to the universal ribosomal protein uS4 family. In terms of assembly, part of the 30S ribosomal subunit. Contacts protein S5. The interaction surface between S4 and S5 is involved in control of translational fidelity.

It is found in the plastid. The protein localises to the chloroplast. Its function is as follows. One of the primary rRNA binding proteins, it binds directly to 16S rRNA where it nucleates assembly of the body of the 30S subunit. With S5 and S12 plays an important role in translational accuracy. In Morus indica (Mulberry), this protein is Small ribosomal subunit protein uS4c (rps4).